Reading from the N-terminus, the 74-residue chain is ATP synthase subunit c (74 aa).

Helical transmembrane passes span 13–33 and 51–71; these read ISVIALAGVGLGIGNIFASLI and ILGFALTEAVALFALLIAFLI.

The protein belongs to the ATPase C chain family. In terms of assembly, F-type ATPases have 2 components, F(1) - the catalytic core - and F(0) - the membrane proton channel. F(1) has five subunits: alpha(3), beta(3), gamma(1), delta(1), epsilon(1). F(0) has three main subunits: a(1), b(2) and c(10-14). The alpha and beta chains form an alternating ring which encloses part of the gamma chain. F(1) is attached to F(0) by a central stalk formed by the gamma and epsilon chains, while a peripheral stalk is formed by the delta and b chains.

It is found in the cell inner membrane. In terms of biological role, f(1)F(0) ATP synthase produces ATP from ADP in the presence of a proton or sodium gradient. F-type ATPases consist of two structural domains, F(1) containing the extramembraneous catalytic core and F(0) containing the membrane proton channel, linked together by a central stalk and a peripheral stalk. During catalysis, ATP synthesis in the catalytic domain of F(1) is coupled via a rotary mechanism of the central stalk subunits to proton translocation. Key component of the F(0) channel; it plays a direct role in translocation across the membrane. A homomeric c-ring of between 10-14 subunits forms the central stalk rotor element with the F(1) delta and epsilon subunits. The chain is ATP synthase subunit c from Granulibacter bethesdensis (strain ATCC BAA-1260 / CGDNIH1).